A 135-amino-acid chain; its full sequence is Cytochrome c oxidase subunit 2 (135 aa).

Cu cation-binding residues include histidine 81, cysteine 116, cysteine 120, and histidine 124.

It belongs to the cytochrome c oxidase subunit 2 family.

The protein localises to the cell membrane. The catalysed reaction is 4 Fe(II)-[cytochrome c] + O2 + 8 H(+)(in) = 4 Fe(III)-[cytochrome c] + 2 H2O + 4 H(+)(out). In terms of biological role, subunits I and II form the functional core of the enzyme complex. Electrons originating in cytochrome c are transferred via heme a and Cu(A) to the binuclear center formed by heme a3 and Cu(B). This is Cytochrome c oxidase subunit 2 (cbaB) from Thermus thermophilus.